A 304-amino-acid polypeptide reads, in one-letter code: Acetyl-coenzyme A carboxylase carboxyl transferase subunit beta (304 aa).

Residues 23 to 292 enclose the CoA carboxyltransferase N-terminal domain; sequence VWTKCDSCGQ…PNPEAPREGV (270 aa). The Zn(2+) site is built by cysteine 27, cysteine 30, cysteine 46, and cysteine 49. A C4-type zinc finger spans residues 27–49; the sequence is CDSCGQVLYRAELERNLEVCPKC. The disordered stretch occupies residues 284 to 304; sequence NPEAPREGVVVPPVPDQEPEA. Residues 295 to 304 show a composition bias toward pro residues; that stretch reads PPVPDQEPEA.

It belongs to the AccD/PCCB family. In terms of assembly, acetyl-CoA carboxylase is a heterohexamer composed of biotin carboxyl carrier protein (AccB), biotin carboxylase (AccC) and two subunits each of ACCase subunit alpha (AccA) and ACCase subunit beta (AccD). Zn(2+) is required as a cofactor.

The protein resides in the cytoplasm. It catalyses the reaction N(6)-carboxybiotinyl-L-lysyl-[protein] + acetyl-CoA = N(6)-biotinyl-L-lysyl-[protein] + malonyl-CoA. It participates in lipid metabolism; malonyl-CoA biosynthesis; malonyl-CoA from acetyl-CoA: step 1/1. Component of the acetyl coenzyme A carboxylase (ACC) complex. Biotin carboxylase (BC) catalyzes the carboxylation of biotin on its carrier protein (BCCP) and then the CO(2) group is transferred by the transcarboxylase to acetyl-CoA to form malonyl-CoA. This Shigella boydii serotype 18 (strain CDC 3083-94 / BS512) protein is Acetyl-coenzyme A carboxylase carboxyl transferase subunit beta.